Reading from the N-terminus, the 537-residue chain is Beta-1-syntrophin (537 aa).

At alanine 2 the chain carries N-acetylalanine. PH domains are found at residues 18-297 (RAQR…SNAG) and 321-432 (EIRH…QGCH). 3 positions are modified to phosphoserine: serine 86, serine 125, and serine 204. A PDZ domain is found at 111–194 (GVKVLKQELG…EVLLEVKYMR (84 aa)). Positions 204-233 (SPVSEIGWETPPPESPRLGGGSAEPLSSQS) are disordered. Threonine 213 is subject to Phosphothreonine. Residues serine 218, serine 225, serine 231, serine 235, and serine 388 each carry the phosphoserine modification. The region spanning 481–537 (PYEKLKMSSDDGIRMLYLDFGGKEGEIQLDLHSCPKPIVFIIHSFLSAKITRLGLVA) is the SU domain. The segment at 517 to 537 (PIVFIIHSFLSAKITRLGLVA) is calmodulin-binding.

Belongs to the syntrophin family. Monomer and homodimer. Interacts with the viral HTLV-1 TAX protein and other members of the syntrophin family: SNTA1 and SNTB2. Interacts with the dystrophin protein DMD and related proteins DTNA and UTRN and with the sodium channel proteins SCN4A and SCN5A. Interacts with DTNB. In terms of processing, phosphorylated by CaM-kinase II. In terms of tissue distribution, ubiquitous. Expressed at high levels in the liver.

It localises to the cell membrane. The protein localises to the sarcolemma. It is found in the cell junction. Its subcellular location is the cytoplasm. The protein resides in the cytoskeleton. Functionally, adapter protein that binds to and probably organizes the subcellular localization of a variety of membrane proteins. May link various receptors to the actin cytoskeleton and the dystrophin glycoprotein complex. The chain is Beta-1-syntrophin (Sntb1) from Mus musculus (Mouse).